The primary structure comprises 180 residues: Non-specific lipid transfer protein GPI-anchored 3 (180 aa).

Residues 1–22 (MEAVRFAVAVVLVFCYVTSSNA) form the signal peptide. Cystine bridges form between C41–C78, C48–C62, C63–C104, and C76–C113. N91 and N120 each carry an N-linked (GlcNAc...) asparagine glycan. 2 stretches are compositionally biased toward low complexity: residues 116–125 (SAGTNSSSTP) and 133–156 (PASSTSTGTGSGSTGNAAPSTAKP). Positions 116 to 156 (SAGTNSSSTPPATPKTPPASSTSTGTGSGSTGNAAPSTAKP) are disordered. S158 carries the GPI-anchor amidated serine lipid modification. A propeptide spans 159 to 180 (SAPAINFGGLSFASAVVATLFF) (removed in mature form).

This sequence belongs to the plant LTP family. Restricted to stamen, pollen and sporophytic tissues. Also detected, at low levels, in stems and leaves.

It localises to the cell membrane. In terms of biological role, lipid transfer protein involved in seed and ovule maturation and development, probably by regulating the fatty acids homeostasis during suberin and sporopollenin biosynthesis or deposition. The chain is Non-specific lipid transfer protein GPI-anchored 3 from Arabidopsis thaliana (Mouse-ear cress).